A 78-amino-acid polypeptide reads, in one-letter code: Acyl carrier protein (78 aa).

The Carrier domain maps to 4–78; that stretch reads AEIKDKVYDI…QQAIDYIVKK (75 aa). Ser39 is modified (O-(pantetheine 4'-phosphoryl)serine).

It belongs to the acyl carrier protein (ACP) family. In terms of processing, 4'-phosphopantetheine is transferred from CoA to a specific serine of apo-ACP by AcpS. This modification is essential for activity because fatty acids are bound in thioester linkage to the sulfhydryl of the prosthetic group.

It localises to the cytoplasm. It functions in the pathway lipid metabolism; fatty acid biosynthesis. Carrier of the growing fatty acid chain in fatty acid biosynthesis. The sequence is that of Acyl carrier protein from Chlorobium limicola (strain DSM 245 / NBRC 103803 / 6330).